The following is a 673-amino-acid chain: Ion-translocating oxidoreductase complex subunit C (673 aa).

4Fe-4S ferredoxin-type domains are found at residues 368–397 and 407–436; these read MGAPQEETSCIRCSACADACPADLLPQQLY and KATAHHIADCIECGACAWVCPSNIPLVQYF. Residues C377, C380, C383, C387, C416, C419, C422, and C426 each contribute to the [4Fe-4S] cluster site. Residues 529–554 form a disordered region; it reads EARKAQARAKQAGHPMADSATSGDDP.

It belongs to the 4Fe4S bacterial-type ferredoxin family. RnfC subfamily. The complex is composed of six subunits: RsxA, RsxB, RsxC, RsxD, RsxE and RsxG. [4Fe-4S] cluster is required as a cofactor.

It localises to the cell inner membrane. Part of a membrane-bound complex that couples electron transfer with translocation of ions across the membrane. Required to maintain the reduced state of SoxR. The sequence is that of Ion-translocating oxidoreductase complex subunit C from Salmonella arizonae (strain ATCC BAA-731 / CDC346-86 / RSK2980).